We begin with the raw amino-acid sequence, 171 residues long: Co-chaperone protein HscB (171 aa).

The J domain occupies 2–74 (DYFTLFGLPA…LMRAEYLLSL (73 aa)).

Belongs to the HscB family. In terms of assembly, interacts with HscA and stimulates its ATPase activity. Interacts with IscU.

Its function is as follows. Co-chaperone involved in the maturation of iron-sulfur cluster-containing proteins. Seems to help targeting proteins to be folded toward HscA. This is Co-chaperone protein HscB from Escherichia coli (strain SE11).